A 178-amino-acid polypeptide reads, in one-letter code: MKIPIILTLMLFSLGFIFGFISINNLSKINDKDLSNYIPNIQFNFPSILTNNLKVIFLMLAGSITFGLSTFINLIFNGFNVGVLIGSISLTNEPLKLITALILPHGIFEISAMLISAVAGFKIPYKVTLYLLDKKEKPLTEEDIKDFLKLSLISIILIVIAAFIEVYITPKIATYLLT.

A run of 4 helical transmembrane segments spans residues 3–23 (IPII…FISI), 56–76 (IFLM…NLIF), 101–121 (LILP…VAGF), and 150–170 (LSLI…YITP).

This sequence to M.jannaschii MJ0706 and Synechocystis PCC 6803 slr1478.

It is found in the cell membrane. This is an uncharacterized protein from Methanocaldococcus jannaschii (strain ATCC 43067 / DSM 2661 / JAL-1 / JCM 10045 / NBRC 100440) (Methanococcus jannaschii).